A 174-amino-acid chain; its full sequence is ATP-dependent protease subunit HslV (174 aa).

T2 is an active-site residue. 3 residues coordinate Na(+): G157, D160, and T163.

This sequence belongs to the peptidase T1B family. HslV subfamily. In terms of assembly, a double ring-shaped homohexamer of HslV is capped on each side by a ring-shaped HslU homohexamer. The assembly of the HslU/HslV complex is dependent on binding of ATP.

It localises to the cytoplasm. The catalysed reaction is ATP-dependent cleavage of peptide bonds with broad specificity.. With respect to regulation, allosterically activated by HslU binding. In terms of biological role, protease subunit of a proteasome-like degradation complex believed to be a general protein degrading machinery. This is ATP-dependent protease subunit HslV from Aliivibrio fischeri (strain MJ11) (Vibrio fischeri).